Here is a 67-residue protein sequence, read N- to C-terminus: DNA-directed RNA polymerase subunit omega (67 aa).

This sequence belongs to the RNA polymerase subunit omega family. As to quaternary structure, the RNAP catalytic core consists of 2 alpha, 1 beta, 1 beta' and 1 omega subunit. When a sigma factor is associated with the core the holoenzyme is formed, which can initiate transcription.

It catalyses the reaction RNA(n) + a ribonucleoside 5'-triphosphate = RNA(n+1) + diphosphate. Its function is as follows. Promotes RNA polymerase assembly. Latches the N- and C-terminal regions of the beta' subunit thereby facilitating its interaction with the beta and alpha subunits. This Albidiferax ferrireducens (strain ATCC BAA-621 / DSM 15236 / T118) (Rhodoferax ferrireducens) protein is DNA-directed RNA polymerase subunit omega.